A 362-amino-acid chain; its full sequence is Chorismate synthase (362 aa).

Arg47 contributes to the NADP(+) binding site. FMN-binding positions include 124–126, Gly286, 301–305, and Arg327; these read RSS and KPTAT.

It belongs to the chorismate synthase family. Homotetramer. FMNH2 is required as a cofactor.

The enzyme catalyses 5-O-(1-carboxyvinyl)-3-phosphoshikimate = chorismate + phosphate. Its pathway is metabolic intermediate biosynthesis; chorismate biosynthesis; chorismate from D-erythrose 4-phosphate and phosphoenolpyruvate: step 7/7. Functionally, catalyzes the anti-1,4-elimination of the C-3 phosphate and the C-6 proR hydrogen from 5-enolpyruvylshikimate-3-phosphate (EPSP) to yield chorismate, which is the branch point compound that serves as the starting substrate for the three terminal pathways of aromatic amino acid biosynthesis. This reaction introduces a second double bond into the aromatic ring system. This chain is Chorismate synthase, found in Gloeothece citriformis (strain PCC 7424) (Cyanothece sp. (strain PCC 7424)).